The primary structure comprises 2082 residues: Polyketide synthase ThaQ (2082 aa).

The interval 398 to 468 is disordered; sequence NDARRAGSAR…DSAHDSAHAA (71 aa). 3 stretches are compositionally biased toward basic and acidic residues: residues 399–411, 419–430, and 439–468; these read DARR…RDAR, HGARHEAAHDAQ, and ADAH…AHAA. Residues 470–546 enclose the Carrier 1 domain; the sequence is ALRREGRAYL…ALLDHLLAAH (77 aa). Ser-507 is modified (O-(pantetheine 4'-phosphoryl)serine). 2 stretches are compositionally biased toward low complexity: residues 560 to 582 and 593 to 605; these read APAR…RAAP and DTPS…APAR. Residues 560-655 are disordered; that stretch reads APARGVGARA…RYAPRAPHPD (96 aa). A compositionally biased stretch (pro residues) spans 606–631; the sequence is PDQPAPSGPPAQPAQPAPRADTPPPA. The Ketosynthase family 3 (KS3) domain occupies 658 to 1077; the sequence is AEPVAIIGIS…GVNAHVVLEE (420 aa). Disordered regions lie at residues 1250-1269 and 1603-1653; these read APGT…EAAE and ARGP…VKSD. 2 stretches are compositionally biased toward low complexity: residues 1256-1269 and 1612-1624; these read ASAG…EAAE and SPDA…RAQA. A compositionally biased stretch (basic and acidic residues) spans 1640–1653; that stretch reads ADSKAGPKSEVKSD. In terms of domain architecture, Carrier 2 spans 1669-1743; sequence ASVAASVEDA…ALVRAVAEAV (75 aa). Ser-1703 is modified (O-(pantetheine 4'-phosphoryl)serine). The AB hydrolase-1 domain maps to 1792-2022; the sequence is PRVVLIPGLG…GAGHAVFLTH (231 aa). A compositionally biased stretch (low complexity) spans 2045-2067; sequence GAAESVESVEATEAAEAARSPAV. Positions 2045–2082 are disordered; sequence GAAESVESVEATEAAEAARSPAVARRRATDDAPVGSDA.

Requires pantetheine 4'-phosphate as cofactor.

The protein resides in the cytoplasm. The protein operates within antibiotic biosynthesis. In terms of biological role, involved in production of the polyketide antibiotic thailandamide. In Burkholderia thailandensis (strain ATCC 700388 / DSM 13276 / CCUG 48851 / CIP 106301 / E264), this protein is Polyketide synthase ThaQ.